The primary structure comprises 241 residues: Probable FKBP-type peptidyl-prolyl cis-trans isomerase (241 aa).

A PPIase FKBP-type domain is found at 150–241; the sequence is TDTVKVHYTG…VLDVNPKSEK (92 aa).

The protein belongs to the FKBP-type PPIase family.

It carries out the reaction [protein]-peptidylproline (omega=180) = [protein]-peptidylproline (omega=0). In terms of biological role, PPIases accelerate the folding of proteins. It catalyzes the cis-trans isomerization of proline imidic peptide bonds in oligopeptides. The chain is Probable FKBP-type peptidyl-prolyl cis-trans isomerase from Haemophilus influenzae (strain ATCC 51907 / DSM 11121 / KW20 / Rd).